The following is a 147-amino-acid chain: Leech anti-platelet protein (147 aa).

Positions 1–21 are cleaved as a signal peptide; sequence MNSFLFSLACSLLVAIPAISA. Residues 21–71 form a disordered region; sequence AQDEDAGGAGDETSEGEDTTGSDETPSTGGGGDGGNEETITAGNEDCWSKR. Residues 22 to 41 are compositionally biased toward acidic residues; that stretch reads QDEDAGGAGDETSEGEDTTG. Intrachain disulfides connect cysteine 67/cysteine 145, cysteine 92/cysteine 117, and cysteine 96/cysteine 105.

The N-terminus is blocked. In terms of tissue distribution, expressed by salivary glands.

The protein resides in the secreted. In terms of biological role, inhibits collagen-stimulated platelet aggregation (IC(50)=60 nM), dense granule release and serotonin release. Does not inhibit platelet aggregation induced by ADP, arachidonic acid, and thrombin. This chain is Leech anti-platelet protein, found in Haementeria officinalis (Mexican leech).